Consider the following 554-residue polypeptide: Propanediol dehydratase large subunit (554 aa).

The protein belongs to the diol/glycerol dehydratase large subunit family. In terms of assembly, the propanediol dehydratase enzyme is a heterotrimeric complex composed of a large (PduC), a medium (PduD) and a small (PduE) subunit. Adenosylcob(III)alamin serves as cofactor.

It is found in the bacterial microcompartment. The enzyme catalyses propane-1,2-diol = propanal + H2O. It participates in polyol metabolism; 1,2-propanediol degradation. Its function is as follows. Part of the PduCDE complex that catalyzes the dehydration of 1,2-propanediol (1,2-PD) to propionaldehyde. This subunit is directly targeted to the bacterial microcompartment (BMC). In terms of biological role, expression of a cosmid containing the full 21-gene pdu operon in E.coli allows E.coli to grow on 1,2-propanediol (1,2-PD) with the appearance of BMCs in its cytoplasm. Functionally, the 1,2-PD-specific bacterial microcompartment (BMC) concentrates low levels of 1,2-PD catabolic enzymes, concentrates volatile reaction intermediates thus enhancing pathway flux and keeps the level of toxic, mutagenic propionaldehyde low. This Citrobacter freundii protein is Propanediol dehydratase large subunit.